The following is a 283-amino-acid chain: MQKLVAFWQLMRADRPIGTYLLAWPTIWALMIAGAGEPPLRIVVIFLLGTFVMRSAGCVINDFADRNYDGHVRRTRQRPIPAGRISATEAMIGFIALLAIAFGLVMQLNTETVMLSFFAAGVAALYPFCKRWTHLPQIVLGIAFSFGIPMAFTALESDQWFIAGLLFLANILWTVAYDTEYAMADREDDLKIGLQSTAILFGRFDRLAIGLLQLATLALLGWILHLITVELWVWLALAAIFLLFAYQHWLIRHREPGKCFQAFLHNHYIGMVFAIGLAVHYWF.

Transmembrane regions (helical) follow at residues 16 to 36, 40 to 60, 85 to 105, 108 to 128, 135 to 155, 160 to 180, 204 to 224, 226 to 246, and 263 to 283; these read PIGT…AGAG, LRIV…GCVI, ISAT…FGLV, LNTE…LYPF, LPQI…FTAL, WFIA…YDTE, FDRL…GWIL, LITV…LFAY, and FLHN…HYWF.

Belongs to the UbiA prenyltransferase family. It depends on Mg(2+) as a cofactor.

The protein resides in the cell inner membrane. It catalyses the reaction all-trans-octaprenyl diphosphate + 4-hydroxybenzoate = 4-hydroxy-3-(all-trans-octaprenyl)benzoate + diphosphate. Its pathway is cofactor biosynthesis; ubiquinone biosynthesis. Its function is as follows. Catalyzes the prenylation of para-hydroxybenzoate (PHB) with an all-trans polyprenyl group. Mediates the second step in the final reaction sequence of ubiquinone-8 (UQ-8) biosynthesis, which is the condensation of the polyisoprenoid side chain with PHB, generating the first membrane-bound Q intermediate 3-octaprenyl-4-hydroxybenzoate. The chain is 4-hydroxybenzoate octaprenyltransferase from Idiomarina loihiensis (strain ATCC BAA-735 / DSM 15497 / L2-TR).